We begin with the raw amino-acid sequence, 556 residues long: Formate--tetrahydrofolate ligase (556 aa).

65 to 72 (TPAGEGKT) provides a ligand contact to ATP.

This sequence belongs to the formate--tetrahydrofolate ligase family.

It carries out the reaction (6S)-5,6,7,8-tetrahydrofolate + formate + ATP = (6R)-10-formyltetrahydrofolate + ADP + phosphate. The protein operates within one-carbon metabolism; tetrahydrofolate interconversion. This Hyphomonas neptunium (strain ATCC 15444) protein is Formate--tetrahydrofolate ligase.